The sequence spans 481 residues: Phosphoglycerate kinase, chloroplastic (481 aa).

The transit peptide at 1–75 (MASATASHTL…SSKPIRGVAS (75 aa)) directs the protein to the chloroplast. (2R)-3-phosphoglycerate contacts are provided by Ala98, Asp99, Asn101, Arg115, Ser137, His138, Gly140, Arg141, Arg196, His228, and Arg229. Gly274 serves as a coordination point for ADP. Gly274 is a CDP binding site. Residues Lys276 and Lys280 each coordinate AMP. Position 280 (Lys280) interacts with ATP. Residue Gly298 participates in ADP binding. Residue Gly298 coordinates CDP. Gly299 and Gly371 together coordinate AMP. Residues Gly299 and Gly371 each coordinate ATP. CDP is bound by residues Gly396 and Phe401. An ADP-binding site is contributed by Phe401. Glu402 lines the AMP pocket. Residues Glu402, Asp433, and Ser434 each contribute to the ATP site. A Mg(2+)-binding site is contributed by Asp433.

The protein belongs to the phosphoglycerate kinase family. As to quaternary structure, monomer. Requires Mg(2+) as cofactor.

It is found in the plastid. The protein localises to the chloroplast. The catalysed reaction is (2R)-3-phosphoglycerate + ATP = (2R)-3-phospho-glyceroyl phosphate + ADP. It functions in the pathway carbohydrate biosynthesis; Calvin cycle. The polypeptide is Phosphoglycerate kinase, chloroplastic (Nicotiana tabacum (Common tobacco)).